The chain runs to 679 residues: Glycine--tRNA ligase beta subunit (679 aa).

It belongs to the class-II aminoacyl-tRNA synthetase family. As to quaternary structure, tetramer of two alpha and two beta subunits.

The protein resides in the cytoplasm. The enzyme catalyses tRNA(Gly) + glycine + ATP = glycyl-tRNA(Gly) + AMP + diphosphate. In Streptococcus pyogenes serotype M4 (strain MGAS10750), this protein is Glycine--tRNA ligase beta subunit.